The sequence spans 207 residues: MKFLFDLLPIVLFFVAFKVAEGQPDAAAAFASQHFGFLVSGGMVGPKEAPVLLATLVVIVATFAQIGWLLLRGRKVDTMLWVSLGLVTVLGGATVWFHNETFIKWKPSVLYWVMGTAFWLSHAVFRKNLLQTLMGGQLQLPPAVWRNLNFMWIAFFAFMGLANLYVAYSFPTDVWVNFKLFGGVGLMLLFTLAQGLYLSRHIKTEDE.

6 helical membrane passes run 3-23 (FLFDLLPIVLFFVAFKVAEGQ), 51-71 (VLLATLVVIVATFAQIGWLLL), 78-98 (TMLWVSLGLVTVLGGATVWFH), 105-125 (WKPSVLYWVMGTAFWLSHAVF), 150-170 (FMWIAFFAFMGLANLYVAYSF), and 178-198 (FKLFGGVGLMLLFTLAQGLYL).

This sequence belongs to the YciB family.

The protein localises to the cell inner membrane. Plays a role in cell envelope biogenesis, maintenance of cell envelope integrity and membrane homeostasis. The polypeptide is Inner membrane-spanning protein YciB (Methylibium petroleiphilum (strain ATCC BAA-1232 / LMG 22953 / PM1)).